A 71-amino-acid polypeptide reads, in one-letter code: Large ribosomal subunit protein bL31 (71 aa).

Zn(2+) is bound by residues cysteine 16, cysteine 18, cysteine 37, and cysteine 40.

It belongs to the bacterial ribosomal protein bL31 family. Type A subfamily. As to quaternary structure, part of the 50S ribosomal subunit. The cofactor is Zn(2+).

In terms of biological role, binds the 23S rRNA. The sequence is that of Large ribosomal subunit protein bL31 from Pseudomonas putida (strain W619).